The primary structure comprises 297 residues: MLATEARQILSRVGSLVARNQMRAISNGTAQLEQQAQPKEAQEPQIKKFEIYRWNPDNAGEKPYMQTYEVDLRECGPMVLDALIKIKNEMDPTLTFRRSCREGICGSCAMNIGGTNTLACISKIDINTSKSLKVYPLPHMYVVRDLVPDMNNFYEQYRNIQPWLQRKNEAGEKKGKAQYLQSVEDRSKLDGLYECILCACCSTSCPSYWWNAEKYLGPAVLMQAYRWIIDSRDENSAERLNKLKDPFSVYRCHTIMNCTRTCPKGLNPGRAIAEIKKLLSGLASKPAPKLETAALHK.

A 2Fe-2S ferredoxin-type domain is found at 47 to 140 (KKFEIYRWNP…SLKVYPLPHM (94 aa)). 4 residues coordinate [2Fe-2S] cluster: Cys-100, Cys-105, Cys-108, and Cys-120. Residues 185-215 (DRSKLDGLYECILCACCSTSCPSYWWNAEKY) enclose the 4Fe-4S ferredoxin-type domain. [4Fe-4S] cluster-binding residues include Cys-195, Cys-198, and Cys-201. A [3Fe-4S] cluster-binding site is contributed by Cys-205. A ubiquinone is bound at residue Trp-210. Residues Cys-252 and Cys-258 each coordinate [3Fe-4S] cluster. [4Fe-4S] cluster is bound at residue Cys-262.

This sequence belongs to the succinate dehydrogenase/fumarate reductase iron-sulfur protein family. Component of complex II composed of four subunits: a flavoprotein (FP), an iron-sulfur protein (IP), and a cytochrome b composed of a large and a small subunit. The cofactor is [2Fe-2S] cluster. [3Fe-4S] cluster serves as cofactor. It depends on [4Fe-4S] cluster as a cofactor. Most abundant in the adult thorax and low in abdominal tissues.

It localises to the mitochondrion inner membrane. It catalyses the reaction a quinone + succinate = fumarate + a quinol. Its pathway is carbohydrate metabolism; tricarboxylic acid cycle; fumarate from succinate (eukaryal route): step 1/1. Functionally, iron-sulfur protein (IP) subunit of succinate dehydrogenase (SDH) that is involved in complex II of the mitochondrial electron transport chain and is responsible for transferring electrons from succinate to ubiquinone (coenzyme Q). This is Succinate dehydrogenase [ubiquinone] iron-sulfur subunit, mitochondrial (SdhB) from Drosophila melanogaster (Fruit fly).